The primary structure comprises 423 residues: Adenylosuccinate synthetase (423 aa).

GTP contacts are provided by residues Gly-12–Lys-18 and Gly-40–Thr-42. Asp-13 acts as the Proton acceptor in catalysis. 2 residues coordinate Mg(2+): Asp-13 and Gly-40. Residues Asp-13–Lys-16, Asn-38–His-41, Thr-129, Arg-143, Gln-224, Thr-239, and Arg-303 contribute to the IMP site. The active-site Proton donor is His-41. A substrate-binding site is contributed by Ala-299 to Arg-305. GTP-binding positions include Arg-305, Lys-331 to Asp-333, and Ser-412 to Gly-414.

The protein belongs to the adenylosuccinate synthetase family. In terms of assembly, homodimer. Requires Mg(2+) as cofactor.

It localises to the cytoplasm. It catalyses the reaction IMP + L-aspartate + GTP = N(6)-(1,2-dicarboxyethyl)-AMP + GDP + phosphate + 2 H(+). The protein operates within purine metabolism; AMP biosynthesis via de novo pathway; AMP from IMP: step 1/2. Functionally, plays an important role in the de novo pathway of purine nucleotide biosynthesis. Catalyzes the first committed step in the biosynthesis of AMP from IMP. The polypeptide is Adenylosuccinate synthetase (Christiangramia forsetii (strain DSM 17595 / CGMCC 1.15422 / KT0803) (Gramella forsetii)).